A 494-amino-acid polypeptide reads, in one-letter code: Leucine-rich repeat extensin-like protein 4 (494 aa).

The first 25 residues, 1–25 (MKNNTTQSLLLLLLFFFFFFEISHS), serve as a signal peptide directing secretion. 3 N-linked (GlcNAc...) asparagine glycosylation sites follow: N60, N94, and N106. LRR repeat units follow at residues 121-145 (IRTV…LGLL), 146-168 (TDLA…KFKQ), 169-193 (LKLL…VLHL), 194-217 (PSLK…LFSK), 219-240 (LDAI…FGDS), 242-263 (VSVI…LVEM), 264-287 (KNLN…IGRL), 289-311 (NVTV…VGGM), and 312-335 (VEVE…ICQL). N-linked (GlcNAc...) asparagine glycosylation is present at N289. A glycan (N-linked (GlcNAc...) asparagine) is linked at N340. Positions 404–494 (SPPIVALPPP…YASPPPPPFY (91 aa)) are contains the Ser-Pro(4) repeats. Over residues 422 to 479 (PPVYSPPPSPPVFSPPPSPPVYSPPPPPSIHYSSPPPPPVHHSSPPPPSPEFEGPLPP) the composition is skewed to pro residues. The interval 422–482 (PPVYSPPPSP…FEGPLPPVIG (61 aa)) is disordered.

Hydroxylated on proline residues in the S-P-P-P-P repeat. Post-translationally, O-glycosylated on hydroxyprolines. As to expression, expressed in roots, stems, leaves and flowers, mostly in vascular tissues.

It is found in the secreted. Its subcellular location is the cell wall. Its function is as follows. Modulates cell morphogenesis by regulating cell wall formation and assembly, and/or growth polarization. This chain is Leucine-rich repeat extensin-like protein 4 (LRX4), found in Arabidopsis thaliana (Mouse-ear cress).